Reading from the N-terminus, the 377-residue chain is Glutamate 5-kinase (377 aa).

An ATP-binding site is contributed by Lys20. Positions 60, 147, and 159 each coordinate substrate. Residue 179 to 180 (TD) coordinates ATP. Positions 285-363 (AGRLVIDDGA…DKVYQVLGEA (79 aa)) constitute a PUA domain.

The protein belongs to the glutamate 5-kinase family.

Its subcellular location is the cytoplasm. The catalysed reaction is L-glutamate + ATP = L-glutamyl 5-phosphate + ADP. It functions in the pathway amino-acid biosynthesis; L-proline biosynthesis; L-glutamate 5-semialdehyde from L-glutamate: step 1/2. Its function is as follows. Catalyzes the transfer of a phosphate group to glutamate to form L-glutamate 5-phosphate. The polypeptide is Glutamate 5-kinase (Acinetobacter baumannii (strain AB307-0294)).